The following is a 506-amino-acid chain: Cytochrome P450 monooxygenase atr2 (506 aa).

A helical transmembrane segment spans residues 18–38 (VFAGLVLASLLTTTYCIWNIF). A heme-binding site is contributed by Cys451.

It belongs to the cytochrome P450 family. Heme serves as cofactor.

Its subcellular location is the membrane. It catalyses the reaction 4-O-demethylbarbatate + reduced [NADPH--hemoprotein reductase] + O2 = proatranorin II + oxidized [NADPH--hemoprotein reductase] + H2O + H(+). The enzyme catalyses proatranorin II + reduced [NADPH--hemoprotein reductase] + O2 = proatranorin III + oxidized [NADPH--hemoprotein reductase] + 2 H2O + H(+). The catalysed reaction is proatranorin I + reduced [NADPH--hemoprotein reductase] + O2 = proatranorin IV + oxidized [NADPH--hemoprotein reductase] + H2O + H(+). It carries out the reaction proatranorin IV + reduced [NADPH--hemoprotein reductase] + O2 = atranorin + oxidized [NADPH--hemoprotein reductase] + 2 H2O + H(+). It functions in the pathway secondary metabolite biosynthesis; terpenoid biosynthesis. Cytochrome P450 monooxygenase; part of the gene cluster that mediates the biosynthesis of atranorin, a depside of polyketide origin that accumulates in the cortical or medullary layers of lichen thalli. Atr2 performs the oxidation at the C-9 position of 4-O-demethylbarbatic acid to yield proatranorin III via proatranorin II. Atr2 is also able to oxidize the atr3 product proatranorin I to produce the final compound atranorin. The first step in the pathway is performed by the non-reducing polyketide synthase atr1 that produces 4-O-demethylbarbatic acid composed of two 3-methylorsellinic acid (3MOA) moieties. The pathway continues with the actions of the cytochrome P450 monooygenase atr2 that catalizes the oxidation of c-9 and the O-methyltransferase atr3 that performs the methylation of the carboxyl group to yield atranorin, via the proatranorin II and III intermediates if atr2 acts first, or the proatranorin I intermediate if atr3 acts first. The chain is Cytochrome P450 monooxygenase atr2 from Stereocaulon alpinum (Alpine snow lichen).